A 208-amino-acid polypeptide reads, in one-letter code: Proheparin-binding EGF-like growth factor (208 aa).

A signal peptide spans 1–23; that stretch reads MKLLPSVMLKLFLAAVLSALVTG. Residues 24–62 constitute a propeptide that is removed on maturation; it reads ESLERLRRGLAAATSNPDPPTGSTNQLLPTGGDRAQGVQ. Over 24-160 the chain is Extracellular; the sequence is ESLERLRRGL…ENPLYTYDHT (137 aa). Disordered regions lie at residues 35 to 57 and 80 to 104; these read AATS…GGDR and PQGL…LGKK. Positions 36-51 are enriched in polar residues; the sequence is ATSNPDPPTGSTNQLL. Residue threonine 85 is glycosylated (O-linked (GalNAc...) threonine). Residues 91 to 102 are compositionally biased toward basic residues; that stretch reads NGKKKKKGKGLG. The EGF-like domain occupies 104–144; that stretch reads KRDPCLRKYKDYCIHGECRYLQEFRTPSCKCLPGYHGHRCH. 3 disulfides stabilise this stretch: cysteine 108-cysteine 121, cysteine 116-cysteine 132, and cysteine 134-cysteine 143. Positions 149 to 208 are cleaved as a propeptide — C-terminal; sequence PVENPLYTYDHTTVLAVVAVVLSSVCLLVIVGLLMFRYHRRGGYDLESEEKVKLGVASSH. The chain crosses the membrane as a helical span at residues 161 to 184; it reads TVLAVVAVVLSSVCLLVIVGLLMF. Residues 185-208 lie on the Cytoplasmic side of the membrane; sequence RYHRRGGYDLESEEKVKLGVASSH.

Interacts with FBLN1. Interacts with EGFR and ERBB4. Post-translationally, O-glycosylated. In terms of tissue distribution, most abundant in kidney, skeletal muscle, lung, spleen, brain and heart.

It localises to the secreted. The protein resides in the extracellular space. It is found in the cell membrane. In terms of biological role, growth factor that mediates its effects via EGFR, ERBB2 and ERBB4. Required for normal cardiac valve formation and normal heart function. Promotes smooth muscle cell proliferation. May be involved in macrophage-mediated cellular proliferation. It is mitogenic for fibroblasts, but not endothelial cells. It is able to bind EGF receptor/EGFR with higher affinity than EGF itself and is a far more potent mitogen for smooth muscle cells than EGF. Also acts as a diphtheria toxin receptor. The protein is Proheparin-binding EGF-like growth factor (Hbegf) of Mus musculus (Mouse).